Reading from the N-terminus, the 234-residue chain is Sugar fermentation stimulation protein homolog (234 aa).

It belongs to the SfsA family.

The chain is Sugar fermentation stimulation protein homolog from Photobacterium profundum (strain SS9).